The following is a 447-amino-acid chain: N-succinylarginine dihydrolase (447 aa).

Residues Ala19 to Ser28, Asn110, and His137 to Arg138 each bind substrate. Residue Glu174 is part of the active site. Arg214 serves as a coordination point for substrate. Residue His250 is part of the active site. Substrate is bound by residues Asp252 and Asn364. Cys370 serves as the catalytic Nucleophile.

The protein belongs to the succinylarginine dihydrolase family. In terms of assembly, homodimer.

It catalyses the reaction N(2)-succinyl-L-arginine + 2 H2O + 2 H(+) = N(2)-succinyl-L-ornithine + 2 NH4(+) + CO2. The protein operates within amino-acid degradation; L-arginine degradation via AST pathway; L-glutamate and succinate from L-arginine: step 2/5. Catalyzes the hydrolysis of N(2)-succinylarginine into N(2)-succinylornithine, ammonia and CO(2). The sequence is that of N-succinylarginine dihydrolase from Idiomarina loihiensis (strain ATCC BAA-735 / DSM 15497 / L2-TR).